Reading from the N-terminus, the 80-residue chain is MEARMFWLLVVLLALASSSSAGEYVGLSANQCAVPAKDRVDCGYPQVTPEQCNNRGCCFDSSIXGVPWCFKPLQETECTF.

The first 21 residues, 1 to 21 (MEARMFWLLVVLLALASSSSA), serve as a signal peptide directing secretion. The region spanning 30–73 (NQCAVPAKDRVDCGYPQVTPEQCNNRGCCFDSSIXGVPWCFKPL) is the P-type domain. Disulfide bonds link Cys32-Cys58, Cys42-Cys57, and Cys52-Cys69.

Monomer. Homodimer; disulfide-linked.

It localises to the secreted. It is found in the extracellular space. The protein resides in the extracellular matrix. Its subcellular location is the cytoplasm. Functionally, involved in the maintenance and repair of the intestinal mucosa. Promotes the mobility of epithelial cells in healing processes (motogen). The polypeptide is Trefoil factor 3 (TFF3) (Sus scrofa (Pig)).